Reading from the N-terminus, the 502-residue chain is Cardiolipin synthase (502 aa).

3 consecutive transmembrane segments (helical) span residues 7–27 (VIIFVLAVAAFLFLTNDYWEG), 29–49 (LLGGLSILISCSVVFIAFVIS), and 59–79 (ITWLVVLGSFPLIGFFFYLMF). PLD phosphodiesterase domains are found at residues 237-264 (INFRNHRKIIVIDGTIGFVGGLNIGDEY) and 415-442 (SKGFLHSKIMIVDGELASIGTANMDMRS). Active-site residues include histidine 242, lysine 244, aspartate 249, histidine 420, lysine 422, and aspartate 427.

Belongs to the phospholipase D family. Cardiolipin synthase subfamily.

The protein localises to the cell membrane. The enzyme catalyses 2 a 1,2-diacyl-sn-glycero-3-phospho-(1'-sn-glycerol) = a cardiolipin + glycerol. Its function is as follows. Catalyzes the reversible phosphatidyl group transfer from one phosphatidylglycerol molecule to another to form cardiolipin (CL) (diphosphatidylglycerol) and glycerol. The sequence is that of Cardiolipin synthase (cls) from Geobacillus sp. (strain WCH70).